The chain runs to 507 residues: Phytoene dehydrogenase (507 aa).

12 to 45 contacts FAD; sequence VVVGAGLAGLAAALHLLGAGRRVTVVEREDVPGG.

The protein belongs to the carotenoid/retinoid oxidoreductase family. FAD is required as a cofactor.

It functions in the pathway carotenoid biosynthesis; lycopene biosynthesis. Functionally, this enzyme converts phytoene into zeta-carotene via the intermediary of phytofluene by the symmetrical introduction of two double bonds at the C-11 and C-11' positions of phytoene. This Streptomyces griseus protein is Phytoene dehydrogenase (crtI).